Here is a 166-residue protein sequence, read N- to C-terminus: Interferon gamma (166 aa).

The first 23 residues, 1-23, serve as a signal peptide directing secretion; the sequence is MNYTSFILAFQLCAILGSSTYYC. Pyrrolidone carboxylic acid is present on Gln-24. N-linked (GlcNAc...) asparagine glycans are attached at residues Asn-39 and Asn-106. A disordered region spans residues 147–166; the sequence is ANLRKRKRSQNPFRGRRALQ. A compositionally biased stretch (basic residues) spans 148-166; that stretch reads NLRKRKRSQNPFRGRRALQ.

The protein belongs to the type II (or gamma) interferon family. In terms of assembly, homodimer. Interacts with IFNGR1 (via extracellular domain); this interaction promotes IFNGR1 dimerization. As to expression, released primarily from activated T lymphocytes.

It localises to the secreted. Its function is as follows. Type II interferon produced by immune cells such as T-cells and NK cells that plays crucial roles in antimicrobial, antiviral, and antitumor responses by activating effector immune cells and enhancing antigen presentation. Primarily signals through the JAK-STAT pathway after interaction with its receptor IFNGR1 to affect gene regulation. Upon IFNG binding, IFNGR1 intracellular domain opens out to allow association of downstream signaling components JAK2, JAK1 and STAT1, leading to STAT1 activation, nuclear translocation and transcription of IFNG-regulated genes. Many of the induced genes are transcription factors such as IRF1 that are able to further drive regulation of a next wave of transcription. Plays a role in class I antigen presentation pathway by inducing a replacement of catalytic proteasome subunits with immunoproteasome subunits. In turn, increases the quantity, quality, and repertoire of peptides for class I MHC loading. Increases the efficiency of peptide generation also by inducing the expression of activator PA28 that associates with the proteasome and alters its proteolytic cleavage preference. Up-regulates as well MHC II complexes on the cell surface by promoting expression of several key molecules such as cathepsins B/CTSB, H/CTSH, and L/CTSL. Participates in the regulation of hematopoietic stem cells during development and under homeostatic conditions by affecting their development, quiescence, and differentiation. The sequence is that of Interferon gamma (IFNG) from Equus caballus (Horse).